The primary structure comprises 422 residues: 5'-deoxyadenosine deaminase (422 aa).

The Zn(2+) site is built by H57 and H59. The substrate site is built by E86 and H178. H205 lines the Zn(2+) pocket. Substrate-binding residues include E208 and D294. D294 provides a ligand contact to Zn(2+).

It belongs to the metallo-dependent hydrolases superfamily. MTA/SAH deaminase family. Homotetramer. Zn(2+) serves as cofactor.

It catalyses the reaction 5'-deoxyadenosine + H2O + H(+) = 5'-deoxyinosine + NH4(+). The enzyme catalyses S-adenosyl-L-homocysteine + H2O + H(+) = S-inosyl-L-homocysteine + NH4(+). It carries out the reaction S-methyl-5'-thioadenosine + H2O + H(+) = S-methyl-5'-thioinosine + NH4(+). The catalysed reaction is adenosine + H2O + H(+) = inosine + NH4(+). It participates in amino-acid biosynthesis; S-adenosyl-L-methionine biosynthesis. Functionally, catalyzes the deamination of three SAM-derived enzymatic products, namely 5'-deoxyadenosine, S-adenosyl-L-homocysteine, and 5'-methylthioadenosine, to produce the inosine analogs. Can also deaminate adenosine. The preferred substrate for this enzyme is 5'-deoxyadenosine, but all these substrates are efficiently deaminated. Likely functions in a S-adenosyl-L-methionine (SAM) recycling pathway from S-adenosyl-L-homocysteine (SAH) produced from SAM-dependent methylation reactions. May also be involved in the recycling of 5'-deoxyadenosine, whereupon the 5'-deoxyribose moiety of 5'-deoxyinosine is further metabolized to deoxyhexoses used for the biosynthesis of aromatic amino acids in methanogens. The chain is 5'-deoxyadenosine deaminase from Methanococcus vannielii (strain ATCC 35089 / DSM 1224 / JCM 13029 / OCM 148 / SB).